Reading from the N-terminus, the 510-residue chain is Ribonuclease Y (510 aa).

A helical transmembrane segment spans residues 2–22 (IYIIFSSIFAGFILGFLVRVF). The KH domain maps to 198–258 (TVASVELPND…IRKELAKRTL (61 aa)). An HD domain is found at 324–419 (VLSHSKETAI…VQIADAISAS (96 aa)).

The protein belongs to the RNase Y family.

The protein localises to the cell membrane. Functionally, endoribonuclease that initiates mRNA decay. This is Ribonuclease Y from Borrelia garinii subsp. bavariensis (strain ATCC BAA-2496 / DSM 23469 / PBi) (Borreliella bavariensis).